Here is a 483-residue protein sequence, read N- to C-terminus: FAD-linked oxidoreductase pgmH (483 aa).

The FAD-binding PCMH-type domain occupies serine 54–glutamine 215.

The protein belongs to the oxygen-dependent FAD-linked oxidoreductase family. FAD serves as cofactor.

It participates in pigment biosynthesis. The protein operates within secondary metabolite biosynthesis. In terms of biological role, FAD-linked oxidoreductase; part of the gene cluster that mediates the biosynthesis of pleosporalin A, ascomycone A, as well as a third cryptic naphthoquinone derived pigment, all responsible for the coloration of conidia. Essential for the production of pleosporalin A, but not the 2 other final products. The pathway begins with the biosynthesis of the cyclized heptaketide 3-acetonyl-1,6,8-trihydroxy-2-naphthaldehyde by the NR-PKS pgmA. The C-6 hydroxyl group is further methylated by the O-methyltransferase pgmB to yield fusarubinaldehyde which is in turn oxidized by the cytochrome P450 monooxygenase pgmC at C-9. The C-1 hydroxyl group is then methylated spontaneously. Although pgmE, pgmD and pgmH are essential for the production of pleosporalin A, it is not the case for the 2 other final products and it remains difficult to assign a specific function to each enzyme. PgmF and pgmG seem not to be involved in pigment biosynthesis although they were regulated by the cluster-specific transcription factor pgmR. This Aspergillus terreus (strain NIH 2624 / FGSC A1156) protein is FAD-linked oxidoreductase pgmH.